Reading from the N-terminus, the 148-residue chain is Putative lysozyme C-2 (148 aa).

The N-terminal stretch at 1-18 (MKALLVLGFLLLSASVQA) is a signal peptide. Residues 19–148 (KVFKHCELAR…LSGYIRNCGV (130 aa)) enclose the C-type lysozyme domain. 4 cysteine pairs are disulfide-bonded: C24–C146, C48–C134, C83–C99, and C95–C113. Active-site residues include E53 and D71.

This sequence belongs to the glycosyl hydrolase 22 family. Monomer.

It is found in the secreted. It carries out the reaction Hydrolysis of (1-&gt;4)-beta-linkages between N-acetylmuramic acid and N-acetyl-D-glucosamine residues in a peptidoglycan and between N-acetyl-D-glucosamine residues in chitodextrins.. In terms of biological role, lysozymes have primarily a bacteriolytic function; those in tissues and body fluids are associated with the monocyte-macrophage system and enhance the activity of immunoagents. In the intestine they may also have a digestive function. The chain is Putative lysozyme C-2 (Lyz2) from Rattus norvegicus (Rat).